The following is a 179-amino-acid chain: Large ribosomal subunit protein uL6 (179 aa).

It belongs to the universal ribosomal protein uL6 family. Part of the 50S ribosomal subunit.

This protein binds to the 23S rRNA, and is important in its secondary structure. It is located near the subunit interface in the base of the L7/L12 stalk, and near the tRNA binding site of the peptidyltransferase center. This Gemmatimonas aurantiaca (strain DSM 14586 / JCM 11422 / NBRC 100505 / T-27) protein is Large ribosomal subunit protein uL6.